The chain runs to 173 residues: Photosystem I assembly protein Ycf3 (173 aa).

TPR repeat units lie at residues 35 to 68 (AYVYYRDGLSAQNDGDYAEALENYEESLKLEENP), 72 to 105 (GETLKNMAIIYMSNGEEDRALATYQKALDENPKQ), and 120 to 153 (GRTAEEEGRRDDADGWFDQAAEVWTQAVRLNPGG).

This sequence belongs to the Ycf3 family.

It localises to the cellular thylakoid membrane. Essential for the assembly of the photosystem I (PSI) complex. May act as a chaperone-like factor to guide the assembly of the PSI subunits. In Synechococcus sp. (strain WH7803), this protein is Photosystem I assembly protein Ycf3.